The chain runs to 120 residues: Prefoldin subunit beta (120 aa).

Belongs to the prefoldin subunit beta family. In terms of assembly, heterohexamer of two alpha and four beta subunits.

Its subcellular location is the cytoplasm. In terms of biological role, molecular chaperone capable of stabilizing a range of proteins. Seems to fulfill an ATP-independent, HSP70-like function in archaeal de novo protein folding. This is Prefoldin subunit beta from Methanothrix thermoacetophila (strain DSM 6194 / JCM 14653 / NBRC 101360 / PT) (Methanosaeta thermophila).